The following is a 149-amino-acid chain: Transcription factor Atoh7 (149 aa).

A bHLH domain is found at 41–93; that stretch reads RRRLAANARERRRMQGLNTAFDRLRRVVPQWGQDKKLSKYETLQMALSYIIAL.

As to quaternary structure, forms a heterodimer with TCF3 isoform E47; interaction may be required for DNA-binding in certain situations. As to expression, expressed in retinal ganglion cells. Expressed in the cerebellum, trapezoid body, ventral nucleus of the lateral lamniscus and in areas of the auditory hindbrain such as the cochlear nucleus, lateral superior olive and medial nucleus of the trapezoid body. Expressed in the modiolar nerve root and in the cochlear in a small group of bushy neurons within the acoustic nerve. Expressed weakly in the sensory epithelia of the saccule and utricle.

Its subcellular location is the nucleus. The protein localises to the perikaryon. The protein resides in the cell projection. It localises to the axon. Functionally, transcription factor that binds to DNA at the consensus sequence 5'-CAG[GC]TG-3'. Dimerization with TCF3 isoform E47 may be required in certain situations. Binds to gene promoters and enhancer elements, and thereby regulates a transcriptional program of retinal ganglion cell (RGC) determinant genes. Although the exact mechanism is not certain, retinal transcription regulation by ATOH7 has a role in RGC determination and survival, photoreceptor population development, targeting of RGC axons to the optic nerve and development of the retino-hypothalamic tract. Binds to its own promoter and enhancer sequences, suggesting autoregulation of ATOH7 transcription. Required for retinal circadian rhythm photoentrainment. Plays a role in brainstem auditory signaling and binaural processing. The polypeptide is Transcription factor Atoh7 (Mus musculus (Mouse)).